A 683-amino-acid polypeptide reads, in one-letter code: Glycine--tRNA ligase beta subunit (683 aa).

The protein belongs to the class-II aminoacyl-tRNA synthetase family. In terms of assembly, tetramer of two alpha and two beta subunits.

It is found in the cytoplasm. It catalyses the reaction tRNA(Gly) + glycine + ATP = glycyl-tRNA(Gly) + AMP + diphosphate. The chain is Glycine--tRNA ligase beta subunit from Pseudomonas putida (strain W619).